The primary structure comprises 86 residues: BaSO(4)-adsorbing protein 1 (86 aa).

3 cysteine pairs are disulfide-bonded: Cys6/Cys22, Cys18/Cys49, and Cys39/Cys54. A disordered region spans residues 58–86; that stretch reads GDSASNTQNQGGSRRQENEDQGDDEWDRK. Residues 59 to 70 are compositionally biased toward polar residues; it reads DSASNTQNQGGS. A compositionally biased stretch (acidic residues) spans 76 to 86; it reads EDQGDDEWDRK.

In terms of tissue distribution, salivary gland (at protein level).

The protein resides in the secreted. Inhibits lectin and classical pathways of complement system activation in the host with no significant effect on the alternative pathway. Inhibits host extrinsic blood coagulation pathway but not the intrinsic cascade. Binds to neutral and negatively charged membranes in vitro; binding is reduced upon pre-incubation with Ca(2+). In Ornithodoros savignyi (African eyed tampan), this protein is BaSO(4)-adsorbing protein 1.